The chain runs to 491 residues: Serralysin (491 aa).

Positions 1–16 (MGSFLLKKAVGLSNIS) are excised as a propeptide. H186 serves as a coordination point for Zn(2+). E187 is an active-site residue. Zn(2+)-binding residues include H190, H196, and Y226. Ca(2+) contacts are provided by R263, G265, D295, G297, G298, D300, T337, E339, G344, G346, D348, N353, A355, N357, G361, G362, G364, D366, G370, G373, D384, G388, G389, G391, D402, D409, and D419. Hemolysin-type calcium-binding repeat units lie at residues 342–359 (IGGFGNDIIHGNDADNTL), 360–377 (IGGEGDDIIYGHSGNNTI), and 378–395 (YGGRGQDTLHGGTGSNTF).

The protein belongs to the peptidase M10B family. The cofactor is Ca(2+). Zn(2+) serves as cofactor.

It localises to the secreted. The enzyme catalyses Preferential cleavage of bonds with hydrophobic residues in P1'.. Its activity is regulated as follows. Ca(2+) increases protease activity. Functionally, one of the virulence factors produced during swarmer cell differentiation of the bacteria, which seems to be associated with pathogenesis. The protease activity is limited to IgA1, IgA2, as well as IgG degradation. The polypeptide is Serralysin (zapA) (Proteus mirabilis).